A 251-amino-acid chain; its full sequence is Ubiquinone/menaquinone biosynthesis C-methyltransferase UbiE (251 aa).

S-adenosyl-L-methionine-binding positions include Thr74, Asp95, 123–124, and Ser140; that span reads NA.

This sequence belongs to the class I-like SAM-binding methyltransferase superfamily. MenG/UbiE family.

It catalyses the reaction a 2-demethylmenaquinol + S-adenosyl-L-methionine = a menaquinol + S-adenosyl-L-homocysteine + H(+). The catalysed reaction is a 2-methoxy-6-(all-trans-polyprenyl)benzene-1,4-diol + S-adenosyl-L-methionine = a 5-methoxy-2-methyl-3-(all-trans-polyprenyl)benzene-1,4-diol + S-adenosyl-L-homocysteine + H(+). The protein operates within quinol/quinone metabolism; menaquinone biosynthesis; menaquinol from 1,4-dihydroxy-2-naphthoate: step 2/2. Its pathway is cofactor biosynthesis; ubiquinone biosynthesis. Functionally, methyltransferase required for the conversion of demethylmenaquinol (DMKH2) to menaquinol (MKH2) and the conversion of 2-polyprenyl-6-methoxy-1,4-benzoquinol (DDMQH2) to 2-polyprenyl-3-methyl-6-methoxy-1,4-benzoquinol (DMQH2). The chain is Ubiquinone/menaquinone biosynthesis C-methyltransferase UbiE from Salmonella arizonae (strain ATCC BAA-731 / CDC346-86 / RSK2980).